The sequence spans 182 residues: Ribulose bisphosphate carboxylase small subunit, chloroplastic (182 aa).

Residues 1–58 (MACSMISSATVAAVSRASPAQSSMVAPFTCLKSTSAFPVTQKTNNDITSIASNGGRVQ) constitute a chloroplast transit peptide.

The protein belongs to the RuBisCO small chain family. Heterohexadecamer of 8 large and 8 small subunits.

Its subcellular location is the plastid. The protein resides in the chloroplast. RuBisCO catalyzes two reactions: the carboxylation of D-ribulose 1,5-bisphosphate, the primary event in carbon dioxide fixation, as well as the oxidative fragmentation of the pentose substrate. Both reactions occur simultaneously and in competition at the same active site. Although the small subunit is not catalytic it is essential for maximal activity. The sequence is that of Ribulose bisphosphate carboxylase small subunit, chloroplastic from Betula pendula (European white birch).